The following is a 102-amino-acid chain: Acid shock protein (102 aa).

The first 21 residues, 1-21 (MKKVLALVVAAAMGLSSAAFA), serve as a signal peptide directing secretion. The segment covering 21-41 (AAETTTTPAPTATTTKAAPAK) has biased composition (low complexity). Residues 21-102 (AAETTTTPAP…PAKPAAQPAA (82 aa)) are disordered. Positions 22 to 58 (AETTTTPAPTATTTKAAPAKTTHHKKQHKAAPAQKAQ) are excised as a propeptide. Positions 80–90 (AAKKHAKKHSH) are enriched in basic residues. The span at 91 to 102 (QQPAKPAAQPAA) shows a compositional bias: low complexity.

It belongs to the Asr family. Post-translationally, proteolytic processing gives rise to the active protein.

Its subcellular location is the periplasm. Its function is as follows. Required for growth and/or survival at acidic conditions. This chain is Acid shock protein, found in Escherichia coli (strain K12 / MC4100 / BW2952).